Consider the following 175-residue polypeptide: Ribosome maturation factor RimM (175 aa).

Residues 96-175 (EEDYYWHDLI…TITVDWDAGF (80 aa)) form the PRC barrel domain.

This sequence belongs to the RimM family. Binds ribosomal protein uS19.

The protein resides in the cytoplasm. Functionally, an accessory protein needed during the final step in the assembly of 30S ribosomal subunit, possibly for assembly of the head region. Essential for efficient processing of 16S rRNA. May be needed both before and after RbfA during the maturation of 16S rRNA. It has affinity for free ribosomal 30S subunits but not for 70S ribosomes. The chain is Ribosome maturation factor RimM from Haemophilus ducreyi (strain 35000HP / ATCC 700724).